Consider the following 441-residue polypeptide: Platelet-activating factor acetylhydrolase (441 aa).

Positions 1-21 (MVPPKLHVLFCLCGCLAVVYP) are cleaved as a signal peptide. The Nucleophile role is filled by Ser-273. Catalysis depends on charge relay system residues Asp-296 and His-351. Residues Asn-423 and Asn-433 are each glycosylated (N-linked (GlcNAc...) asparagine).

This sequence belongs to the AB hydrolase superfamily. Lipase family. In terms of processing, N-glycosylated. Macrophage-derived PLA2G7 carries sialylated complex-type N-glycans that hinder its binding to HDL particles. Plasma. Secreted by macrophages (at protein level).

It localises to the secreted. The protein resides in the extracellular space. The catalysed reaction is a 1-O-alkyl-2-acetyl-sn-glycero-3-phosphocholine + H2O = a 1-O-alkyl-sn-glycero-3-phosphocholine + acetate + H(+). It catalyses the reaction 1-O-decyl-2-acetyl-sn-glycero-3-phosphocholine + H2O = 1-O-decyl-sn-glycero-3-phosphocholine + acetate + H(+). The enzyme catalyses 1-O-dodecyl-2-acetyl-sn-glycero-3-phosphocholine + H2O = 1-O-dodecyl-sn-glycero-3-phosphocholine + acetate + H(+). It carries out the reaction 1-O-tetradecyl-2-acetyl-sn-glycero-3-phosphocholine + H2O = 1-O-tetradecyl-sn-glycero-3-phosphocholine + acetate + H(+). The catalysed reaction is 1-O-hexadecyl-2-acetyl-sn-glycero-3-phosphocholine + H2O = 1-O-hexadecyl-sn-glycero-3-phosphocholine + acetate + H(+). It catalyses the reaction 1-O-octadecyl-2-acetyl-sn-glycero-3-phosphocholine + H2O = 1-O-octadecyl-sn-glycero-3-phosphocholine + acetate + H(+). The enzyme catalyses 1-hexadecanoyl-2-acetyl-sn-glycero-3-phosphocholine + H2O = 1-hexadecanoyl-sn-glycero-3-phosphocholine + acetate + H(+). It carries out the reaction 1-hexadecanoyl-2-propionyl-sn-glycero-3-phosphocholine + H2O = propanoate + 1-hexadecanoyl-sn-glycero-3-phosphocholine + H(+). The catalysed reaction is 1-hexadecanoyl-2-butanoyl-sn-glycero-3-phosphocholine + H2O = butanoate + 1-hexadecanoyl-sn-glycero-3-phosphocholine + H(+). It catalyses the reaction 1-hexadecanoyl-2-pentanoyl-sn-glycero-3-phosphocholine + H2O = pentanoate + 1-hexadecanoyl-sn-glycero-3-phosphocholine + H(+). The enzyme catalyses 1-hexadecanoyl-2-glutaroyl-sn-glycero-3-phosphocholine + H2O = glutarate + 1-hexadecanoyl-sn-glycero-3-phosphocholine + H(+). It carries out the reaction 1-hexadecanoyl-2-(5-oxopentanoyl)-sn-glycero-3-phosphocholine + H2O = 5-oxopentanoate + 1-hexadecanoyl-sn-glycero-3-phosphocholine + H(+). The catalysed reaction is 1-hexadecanoyl-2-(9-oxononanoyl)-sn-glycero-3-phosphocholine + H2O = 9-oxononanoate + 1-hexadecanoyl-sn-glycero-3-phosphocholine + H(+). It catalyses the reaction 1-hexadecanoyl-2-[9-hydroperoxy-(10E-octadecenoyl)]-sn-glycero-3-phosphocholine + H2O = 9-hydroperoxy-10E-octadecenoate + 1-hexadecanoyl-sn-glycero-3-phosphocholine + H(+). The enzyme catalyses 1-hexadecanoyl-2-(10-hydroperoxy-8E-octadecenoyl)-sn-glycero-3-phosphocholine + H2O = 10-hydroperoxy-(8E)-octadecenoate + 1-hexadecanoyl-sn-glycero-3-phosphocholine + H(+). Lipoprotein-associated calcium-independent phospholipase A2 involved in phospholipid catabolism during inflammatory and oxidative stress response. At the lipid-aqueous interface, hydrolyzes the ester bond of fatty acyl group attached at sn-2 position of phospholipids (phospholipase A2 activity). Specifically targets phospholipids with a short-chain fatty acyl group at sn-2 position. Can hydrolyze phospholipids with long fatty acyl chains, only if they carry oxidized functional groups. Hydrolyzes and inactivates platelet-activating factor (PAF, 1-O-alkyl-2-acetyl-sn-glycero-3-phosphocholine), a potent pro-inflammatory signaling lipid that acts through PTAFR on various innate immune cells. Hydrolyzes oxidatively truncated phospholipids carrying an aldehyde group at omega position, preventing their accumulation in low-density lipoprotein (LDL) particles and uncontrolled pro-inflammatory effects. As part of high-density lipoprotein (HDL) particles, can hydrolyze phospholipids having long-chain fatty acyl hydroperoxides at sn-2 position and protect against potential accumulation of these oxylipins in the vascular wall. Catalyzes the release from membrane phospholipids of F2-isoprostanes, lipid biomarkers of cellular oxidative damage. The protein is Platelet-activating factor acetylhydrolase (PLA2G7) of Homo sapiens (Human).